Consider the following 359-residue polypeptide: WAT1-related protein At5g64700 (359 aa).

The next 10 membrane-spanning stretches (helical) occupy residues 10–30, 37–57, 66–86, 100–120, 135–155, 186–206, 218–238, 256–276, 282–302, and 306–326; these read LMVTIIQVIYTIMFLISKAVF, FVFVFYRQAFATIFLAPLAFF, LSFVTFIKIFMLSLFGVTLSL, LAAATTASLPAITFFLALLFG, LVGITVCMGGVIILAIYKGPL, WLKGCVLMITSNILWGLWLVL, LYFTTLHCLLSSIQSFVIAIA, AVIYCGFIVTGVAYYLQSWVI, VFLSMFTPLSLLFTLLSSAIL, and IISLGSIVGGLLLIIGLYCVL. EamA domains follow at residues 18-136 and 198-326; these read IYTI…AKLV and ILWG…YCVL.

This sequence belongs to the drug/metabolite transporter (DMT) superfamily. Plant drug/metabolite exporter (P-DME) (TC 2.A.7.4) family.

It is found in the membrane. The chain is WAT1-related protein At5g64700 from Arabidopsis thaliana (Mouse-ear cress).